Here is a 90-residue protein sequence, read N- to C-terminus: Small ribosomal subunit protein uS15c (90 aa).

This sequence belongs to the universal ribosomal protein uS15 family. As to quaternary structure, part of the 30S ribosomal subunit.

Its subcellular location is the plastid. It localises to the chloroplast. The sequence is that of Small ribosomal subunit protein uS15c (rps15) from Daucus carota (Wild carrot).